A 100-amino-acid polypeptide reads, in one-letter code: Large ribosomal subunit protein uL23 (100 aa).

Belongs to the universal ribosomal protein uL23 family. Part of the 50S ribosomal subunit. Contacts protein L29, and trigger factor when it is bound to the ribosome.

Its function is as follows. One of the early assembly proteins it binds 23S rRNA. One of the proteins that surrounds the polypeptide exit tunnel on the outside of the ribosome. Forms the main docking site for trigger factor binding to the ribosome. The polypeptide is Large ribosomal subunit protein uL23 (Pseudoalteromonas translucida (strain TAC 125)).